The chain runs to 476 residues: MADKTDIISSSSDKASPPPPSAFRNYLSSGSKEPVLLLESAGKESCCIFRVPESFVALNPKAYKPKVVSIGPYHYGEKHLQMIQQHKPRLLQLFLDEAKKKDVEENVLVKAVVDLEDKIRKSYSEELKTGHDLMFMMVLDGCFILMVFLIMSGNIELSEDPIFSIPWLLSSIQSDLLLLENQVPFFVLQTLYVGSKIGVSSDLNRIAFHFFKNPIDKEGSYWEKHRNYKAKHLLDLIRETFLPNTSESDKASSPHVQVQLHEGKSGNVPSVDSKAVPLILSAKRLRLQGIKFRLRRSKEDSILNVRLKKNKLQIPQLRFDGFISSFFLNCVAFEQFYTDSSNEITTYIVFMGCLLNNEEDVTFLRNDKLIIENHFGSNNEVSEFFKTISKDVVFEVDTSYLNNVFKGVNEYTKKWYNGLWAGFRHTHFESPWTFLSSCAVLFVILLTMLQSTVAILSYLNDKKGNGNAAPPPLGLP.

Residues 1–24 (MADKTDIISSSSDKASPPPPSAFR) are disordered. Transmembrane regions (helical) follow at residues 133–153 (LMFM…IMSG) and 439–459 (AVLF…LSYL).

This sequence belongs to the UPF0481 family.

Its subcellular location is the membrane. This Arabidopsis thaliana (Mouse-ear cress) protein is UPF0481 protein At3g47200.